Here is a 466-residue protein sequence, read N- to C-terminus: Soluble pyridine nucleotide transhydrogenase (466 aa).

Residue 36-45 (ERYNNVGGGC) coordinates FAD.

The protein belongs to the class-I pyridine nucleotide-disulfide oxidoreductase family. FAD is required as a cofactor.

The protein localises to the cytoplasm. It carries out the reaction NAD(+) + NADPH = NADH + NADP(+). Its function is as follows. Conversion of NADPH, generated by peripheral catabolic pathways, to NADH, which can enter the respiratory chain for energy generation. This chain is Soluble pyridine nucleotide transhydrogenase, found in Yersinia enterocolitica serotype O:8 / biotype 1B (strain NCTC 13174 / 8081).